A 477-amino-acid polypeptide reads, in one-letter code: Glutamate--tRNA ligase (477 aa).

A 'HIGH' region motif is present at residues 12–22 (PSPTGMFHVGG). Residues C106, C108, C128, and D130 each contribute to the Zn(2+) site. A 'KMSKS' region motif is present at residues 238-242 (KLSKR). K241 contributes to the ATP binding site.

This sequence belongs to the class-I aminoacyl-tRNA synthetase family. Glutamate--tRNA ligase type 1 subfamily. As to quaternary structure, monomer. The cofactor is Zn(2+).

Its subcellular location is the cytoplasm. The enzyme catalyses tRNA(Glu) + L-glutamate + ATP = L-glutamyl-tRNA(Glu) + AMP + diphosphate. Functionally, catalyzes the attachment of glutamate to tRNA(Glu) in a two-step reaction: glutamate is first activated by ATP to form Glu-AMP and then transferred to the acceptor end of tRNA(Glu). This Thermobifida fusca (strain YX) protein is Glutamate--tRNA ligase.